The following is a 195-amino-acid chain: Putative 3-methyladenine DNA glycosylase (195 aa).

The protein belongs to the DNA glycosylase MPG family.

The protein is Putative 3-methyladenine DNA glycosylase of Synechococcus sp. (strain JA-3-3Ab) (Cyanobacteria bacterium Yellowstone A-Prime).